The following is a 321-amino-acid chain: D-alanine--D-alanine ligase (321 aa).

One can recognise an ATP-grasp domain in the interval arginine 121–lysine 315. Proline 147–glutamine 199 provides a ligand contact to ATP. Mg(2+) contacts are provided by glutamate 268, glutamate 282, and asparagine 284.

The protein belongs to the D-alanine--D-alanine ligase family. Mg(2+) is required as a cofactor. Requires Mn(2+) as cofactor.

The protein resides in the cytoplasm. It carries out the reaction 2 D-alanine + ATP = D-alanyl-D-alanine + ADP + phosphate + H(+). It participates in cell wall biogenesis; peptidoglycan biosynthesis. Its function is as follows. Cell wall formation. The chain is D-alanine--D-alanine ligase from Rickettsia rickettsii (strain Iowa).